We begin with the raw amino-acid sequence, 340 residues long: MFQQQKDWETRENAFAAFTMGPLTDFWRQRDEAEFTGVDDIPVRFVRFRAQHHDRVVVICPGRIESYVKYAELAYDLFHLGFDVLIIDHRGQGRSGRLLADPHLGHVNRFNDYVDDLAAFWQQEVQPGPWRKRYILAHSMGGAISTLFLQRHPGVCDAIALTAPMFGIVIRMPSFMARQILNWAEAHPRFRDGYAIGTGRWRALPFAINVLTHSRQRYRRNLRFYADDPTIRVGGPTYHWVRESILAGEQVLAGAGDDATPTLLLQAEEERVVDNRMHDRFCELRTAAGHPVEGGRPLVIKGAYHEILFEKDAMRSVALHAIVDFFNRHNSPSGNRSTEV.

It is found in the cell inner membrane. It carries out the reaction a 1-acyl-sn-glycero-3-phosphocholine + H2O = sn-glycerol 3-phosphocholine + a fatty acid + H(+). The protein is Lysophospholipase L2 (pldB) of Escherichia coli O6:H1 (strain CFT073 / ATCC 700928 / UPEC).